The chain runs to 202 residues: Small ribosomal subunit protein uS4c (202 aa).

One can recognise an S4 RNA-binding domain in the interval 90–153 (MRLDNVIFRL…KSEAIISKNI (64 aa)).

Belongs to the universal ribosomal protein uS4 family. As to quaternary structure, part of the 30S ribosomal subunit. Contacts protein S5. The interaction surface between S4 and S5 is involved in control of translational fidelity.

It localises to the plastid. The protein localises to the chloroplast. Functionally, one of the primary rRNA binding proteins, it binds directly to 16S rRNA where it nucleates assembly of the body of the 30S subunit. In terms of biological role, with S5 and S12 plays an important role in translational accuracy. The protein is Small ribosomal subunit protein uS4c (rps4) of Hypopterygium laricinum (Moss).